A 228-amino-acid polypeptide reads, in one-letter code: Protein CWC15 homolog A (228 aa).

The tract at residues 1–126 (MTTAARPTFE…DEDSDDDTAA (126 aa)) is disordered. The span at 24 to 34 (SQLSKQYSSRD) shows a compositional bias: polar residues. The segment covering 52–84 (EEVRSRDFRRELEERERVVARDKNRDRPTREHT) has biased composition (basic and acidic residues). Positions 102-124 (DADDPLTDEDGDEDSDEDSDDDT) are enriched in acidic residues. Residues 121-165 (DDDTAALLAELEKIKKERAEEKDRKELEQKAEEERIRMENILSGN) are a coiled coil.

It belongs to the CWC15 family. Identified in the spliceosome C complex. Component of the minor spliceosome, which splices U12-type introns.

The protein resides in the nucleus. Involved in pre-mRNA splicing as component of the spliceosome. The polypeptide is Protein CWC15 homolog A (cwc15-a) (Xenopus laevis (African clawed frog)).